The sequence spans 380 residues: D-alanine--D-alanine ligase (380 aa).

The 207-residue stretch at 142–348 (KQVLTAHGIR…YADLIDRLIE (207 aa)) folds into the ATP-grasp domain. 172 to 227 (QSRLGDNVFIKPANQGSSVGIHKASNVQEYLDGVADAFRYDYKVLVEQTIDGPQEV) is an ATP binding site. Mg(2+) is bound by residues aspartate 302, glutamate 315, and asparagine 317.

Belongs to the D-alanine--D-alanine ligase family. Requires Mg(2+) as cofactor. Mn(2+) is required as a cofactor.

It localises to the cytoplasm. It catalyses the reaction 2 D-alanine + ATP = D-alanyl-D-alanine + ADP + phosphate + H(+). The protein operates within cell wall biogenesis; peptidoglycan biosynthesis. Its function is as follows. Cell wall formation. This is D-alanine--D-alanine ligase from Levilactobacillus brevis (strain ATCC 367 / BCRC 12310 / CIP 105137 / JCM 1170 / LMG 11437 / NCIMB 947 / NCTC 947) (Lactobacillus brevis).